We begin with the raw amino-acid sequence, 641 residues long: Pumilio homolog 24 (641 aa).

Positions 1–82 (MSSKGLKPQK…LTEARKKKRK (82 aa)) are disordered. The PUM-HD domain maps to 9 to 404 (QKSTKRKDTD…RPLLQLLHPN (396 aa)). Basic and acidic residues-rich tracts occupy residues 14 to 27 (RKDTDSSAKFDSLK) and 67 to 76 (RVQAKELTEA). Pumilio repeat units follow at residues 118–153 (KMKGKVPEIAVSHVSSRVLQTCVKFCSQAEKDVLFT), 154–189 (ELQPQFLNLASNKYAVHFIQKMLDGASKQQLAACIS), 190–225 (SLRGHVAPLLRHVFGSLVVEHAYHLGSAAQKQELLA), 303–340 (QLLTGSLLLRMVHTRDGSRLAMLSIKHGSAKERKKIIK), and 341–378 (AMKEHVKKMAFDQFGSMVLACIFSIVDDTKLVTKIIVR). Positions 427-468 (MDKSETSSKTKDTDGNEIGEETKDEQEDTVAEHSDHEENVTA) are disordered. Over residues 428-440 (DKSETSSKTKDTD) the composition is skewed to basic and acidic residues. Residues 441–455 (GNEIGEETKDEQEDT) show a composition bias toward acidic residues. Basic and acidic residues predominate over residues 456 to 468 (VAEHSDHEENVTA).

The protein localises to the nucleus. The protein resides in the nucleolus. Functionally, sequence-specific RNA-binding protein that regulates translation and mRNA stability by binding the 3'-UTR of target mRNAs. The protein is Pumilio homolog 24 (APUM24) of Arabidopsis thaliana (Mouse-ear cress).